The sequence spans 506 residues: AAA-ATPase At4g25835 (506 aa).

The first 20 residues, 1-20 (MKEYWTSLASLLGVLAFCQS), serve as a signal peptide directing secretion. Position 244–251 (244–251 (GPPGTGKS)) interacts with ATP. Residues 462–506 (GKSRVQNVSLEEQENRAFDSLYAEENGGEEEEIEDNICKSSDDCS) form a disordered region. The span at 487-496 (NGGEEEEIED) shows a compositional bias: acidic residues. The span at 497–506 (NICKSSDDCS) shows a compositional bias: basic and acidic residues.

It belongs to the AAA ATPase family. BCS1 subfamily. It depends on Mg(2+) as a cofactor.

It catalyses the reaction ATP + H2O = ADP + phosphate + H(+). This Arabidopsis thaliana (Mouse-ear cress) protein is AAA-ATPase At4g25835.